A 94-amino-acid polypeptide reads, in one-letter code: Integration host factor subunit beta (94 aa).

Belongs to the bacterial histone-like protein family. Heterodimer of an alpha and a beta chain.

Functionally, this protein is one of the two subunits of integration host factor, a specific DNA-binding protein that functions in genetic recombination as well as in transcriptional and translational control. The chain is Integration host factor subunit beta from Yersinia pseudotuberculosis serotype O:1b (strain IP 31758).